The following is a 60-amino-acid chain: Large ribosomal subunit protein eL37 (60 aa).

Zn(2+)-binding residues include Cys-19, Cys-22, Cys-34, and Cys-37. The C4-type zinc finger occupies 19-37; the sequence is CRRCGSISYHARHKVCSAC.

The protein belongs to the eukaryotic ribosomal protein eL37 family. Requires Zn(2+) as cofactor.

In terms of biological role, binds to the 23S rRNA. This chain is Large ribosomal subunit protein eL37, found in Methanosphaerula palustris (strain ATCC BAA-1556 / DSM 19958 / E1-9c).